The primary structure comprises 286 residues: NADH-cytochrome b5 reductase 1 (286 aa).

The chain crosses the membrane as a helical span at residues F6 to L26. The FAD-binding FR-type domain maps to Q52 to Q155. Residues D135 to G150 and S161 to L193 each bind FAD.

Belongs to the flavoprotein pyridine nucleotide cytochrome reductase family. Monomer. It depends on FAD as a cofactor.

It localises to the endoplasmic reticulum membrane. Its subcellular location is the mitochondrion outer membrane. It catalyses the reaction 2 Fe(III)-[cytochrome b5] + NADH = 2 Fe(II)-[cytochrome b5] + NAD(+) + H(+). Functionally, electron donor reductase for cytochrome b5. The cytochrome b5/NADH cytochrome b5 reductase electron transfer system supports the catalytic activity of several sterol biosynthetic enzymes. This Dictyostelium discoideum (Social amoeba) protein is NADH-cytochrome b5 reductase 1 (cyb5r1).